The chain runs to 504 residues: uncharacterized protein (504 aa).

It to M.thermoautotrophicum MTH1137.

This is an uncharacterized protein from Methanocaldococcus jannaschii (strain ATCC 43067 / DSM 2661 / JAL-1 / JCM 10045 / NBRC 100440) (Methanococcus jannaschii).